The sequence spans 226 residues: MEGCVSNLMVCNLAYSGKLEELKESILADKSLATRTDQDSRTALHWACSAGHTEIVEFLLQLGVPVNDKDDAGWSPLHIAASAGRDEIVKALLGKGAQVNAVNQNGCTPLHYAASKNRHEIAVMLLEGGANPDAKDHYEATAMHRAAAKGNLKMIHILLYYKASTNIQDTEGNTPLHLACDEERVEEAKLLVSQGASIYIENKEEKTPLQVAKGGLGLILKRMVEG.

The required for nuclear localization stretch occupies residues 1–37; it reads MEGCVSNLMVCNLAYSGKLEELKESILADKSLATRTD. The interval 1–71 is interaction with RB1; sequence MEGCVSNLMV…LGVPVNDKDD (71 aa). ANK repeat units lie at residues 3–36, 37–69, 70–102, 103–135, 136–168, 169–201, and 202–226; these read GCVSNLMVCNLAYSGKLEELKESILADKSLATRT, DQDSRTALHWACSAGHTEIVEFLLQLGVPVNDK, DDAGWSPLHIAASAGRDEIVKALLGKGAQVNAV, NQNGCTPLHYAASKNRHEIAVMLLEGGANPDAK, DHYEATAMHRAAAKGNLKMIHILLYYKASTNIQ, DTEGNTPLHLACDEERVEEAKLLVSQGASIYIE, and NKEEKTPLQVAKGGLGLILKRMVEG. The segment at 39 to 226 is interaction with RELA; sequence DSRTALHWAC…GLILKRMVEG (188 aa). An interaction with RB1 region spans residues 171-226; it reads EGNTPLHLACDEERVEEAKLLVSQGASIYIENKEEKTPLQVAKGGLGLILKRMVEG.

In terms of assembly, part of transient complex containing PSMD10, PSMC4, PSMC5 and PAAF1 formed during the assembly of the 26S proteasome. Stays associated throughout the assembly of the PA700/19S RC and is released upon association with the 20S core. Interacts with PSMC4. Interacts with RB1. Interacts with CDK4. Interacts with MDM2. Interacts with RELA. Associates with a CDK4:CCND2 serine/threonine kinase complex. Interacts with ARHGDIA and increases the interaction between ARHGDIA and RHOA, hence promotes ARHGDIA inactivation of RHOA and ROCK. In terms of tissue distribution, tends to be up-regulated in cancer cells with RAS mutations, including lung cancers and adenocarconimas (at protein level).

The protein localises to the cytoplasm. Its subcellular location is the nucleus. Acts as a chaperone during the assembly of the 26S proteasome, specifically of the PA700/19S regulatory complex (RC). In the initial step of the base subcomplex assembly is part of an intermediate PSMD10:PSMC4:PSMC5:PAAF1 module which probably assembles with a PSMD5:PSMC2:PSMC1:PSMD2 module. Independently of the proteasome, regulates EGF-induced AKT activation through inhibition of the RHOA/ROCK/PTEN pathway, leading to prolonged AKT activation. Plays an important role in RAS-induced tumorigenesis. Its function is as follows. Acts as an proto-oncoprotein by being involved in negative regulation of tumor suppressors RB1 and p53/TP53. Overexpression is leading to phosphorylation of RB1 and proteasomal degradation of RB1. Regulates CDK4-mediated phosphorylation of RB1 by competing with CDKN2A for binding with CDK4. Facilitates binding of MDM2 to p53/TP53 and the mono- and polyubiquitination of p53/TP53 by MDM2 suggesting a function in targeting the TP53:MDM2 complex to the 26S proteasome. Involved in p53-independent apoptosis. Involved in regulation of NF-kappa-B by retaining it in the cytoplasm. Binds to the NF-kappa-B component RELA and accelerates its XPO1/CRM1-mediated nuclear export. In Homo sapiens (Human), this protein is 26S proteasome non-ATPase regulatory subunit 10 (PSMD10).